The primary structure comprises 543 residues: Heparanase-like protein 1 (543 aa).

Residues 1 to 24 form the signal peptide; sequence MGFRVCVIVVFLGCLLLVPEKTMA. Asn184 is a glycosylation site (N-linked (GlcNAc...) asparagine). The active-site Proton donor is the Glu201. Asn304 is a glycosylation site (N-linked (GlcNAc...) asparagine). Catalysis depends on Glu320, which acts as the Nucleophile. N-linked (GlcNAc...) asparagine glycans are attached at residues Asn425 and Asn428.

The protein belongs to the glycosyl hydrolase 79 family.

Its subcellular location is the lysosome membrane. The protein localises to the secreted. Functionally, endoglycosidase which is a cell surface and extracellular matrix-degrading enzyme. Cleaves heparan sulfate proteoglycans (HSPGs) into heparan sulfate side chains and core proteoglycans. In Arabidopsis thaliana (Mouse-ear cress), this protein is Heparanase-like protein 1.